The sequence spans 210 residues: Thymidylate kinase (210 aa).

13-20 (GLEGAGKS) provides a ligand contact to ATP.

The protein belongs to the thymidylate kinase family.

The catalysed reaction is dTMP + ATP = dTDP + ADP. Functionally, phosphorylation of dTMP to form dTDP in both de novo and salvage pathways of dTTP synthesis. The protein is Thymidylate kinase of Shewanella loihica (strain ATCC BAA-1088 / PV-4).